We begin with the raw amino-acid sequence, 376 residues long: MAKPFSFKVLATDGRARRGIIDMPRGEIRTPAFMPVGTGGTVKTMYMDQVRGVGADIILGNTYHLMLRPGAERVARLGGLHEFARWPHPILTDSGGFQVMSLSKLRKLTEKGVTFRSHIDGAPYEMSPERSIEIQSLLDSDIQMQLDECTALPAELKEIERAMELSLRWAERCKTAFGDQPGKAMFGIVQGGDNAALRVRSAQALSAMGLKGYAVGGLAVGEPQAVMLEMLDITCPELPADKPRYLMGVGTPDDILKSVARGIDMFDCVMPTRAGRHGLAYTRRGKVNLRNARHADDPRPLDEESDCPAARDYSRAYLHHLVRSQEALGAMLLTWNNLSYYQKLMQDIRAAIETQTFEARGAEITEGWARGDIPVL.

Asp-93 (proton acceptor) is an active-site residue. Substrate contacts are provided by residues 93–97, Asp-147, Gln-190, and Gly-217; that span reads DSGGF. Residues 248 to 254 form an RNA binding region; that stretch reads GVGTPDD. Asp-267 functions as the Nucleophile in the catalytic mechanism. Residues 272–276 are RNA binding; important for wobble base 34 recognition; the sequence is TRAGR.

The protein belongs to the queuine tRNA-ribosyltransferase family. Homodimer. Within each dimer, one monomer is responsible for RNA recognition and catalysis, while the other monomer binds to the replacement base PreQ1.

The enzyme catalyses 7-aminomethyl-7-carbaguanine + guanosine(34) in tRNA = 7-aminomethyl-7-carbaguanosine(34) in tRNA + guanine. It participates in tRNA modification; tRNA-queuosine biosynthesis. Functionally, catalyzes the base-exchange of a guanine (G) residue with the queuine precursor 7-aminomethyl-7-deazaguanine (PreQ1) at position 34 (anticodon wobble position) in tRNAs with GU(N) anticodons (tRNA-Asp, -Asn, -His and -Tyr). Catalysis occurs through a double-displacement mechanism. The nucleophile active site attacks the C1' of nucleotide 34 to detach the guanine base from the RNA, forming a covalent enzyme-RNA intermediate. The proton acceptor active site deprotonates the incoming PreQ1, allowing a nucleophilic attack on the C1' of the ribose to form the product. After dissociation, two additional enzymatic reactions on the tRNA convert PreQ1 to queuine (Q), resulting in the hypermodified nucleoside queuosine (7-(((4,5-cis-dihydroxy-2-cyclopenten-1-yl)amino)methyl)-7-deazaguanosine). This chain is Queuine tRNA-ribosyltransferase, found in Mesorhizobium japonicum (strain LMG 29417 / CECT 9101 / MAFF 303099) (Mesorhizobium loti (strain MAFF 303099)).